We begin with the raw amino-acid sequence, 137 residues long: Putative pre-16S rRNA nuclease (137 aa).

It belongs to the YqgF nuclease family.

It localises to the cytoplasm. Its function is as follows. Could be a nuclease involved in processing of the 5'-end of pre-16S rRNA. This Anaeromyxobacter dehalogenans (strain 2CP-C) protein is Putative pre-16S rRNA nuclease.